A 336-amino-acid polypeptide reads, in one-letter code: Glycerol-3-phosphate dehydrogenase [NAD(P)+] (336 aa).

Serine 11, tryptophan 12, arginine 32, arginine 33, and lysine 110 together coordinate NADPH. Sn-glycerol 3-phosphate contacts are provided by lysine 110 and glycine 140. Position 144 (alanine 144) interacts with NADPH. Lysine 195, aspartate 248, serine 258, arginine 259, and asparagine 260 together coordinate sn-glycerol 3-phosphate. Residue lysine 195 is the Proton acceptor of the active site. Arginine 259 lines the NADPH pocket. The NADPH site is built by valine 284 and glutamate 286.

This sequence belongs to the NAD-dependent glycerol-3-phosphate dehydrogenase family.

Its subcellular location is the cytoplasm. It carries out the reaction sn-glycerol 3-phosphate + NAD(+) = dihydroxyacetone phosphate + NADH + H(+). The enzyme catalyses sn-glycerol 3-phosphate + NADP(+) = dihydroxyacetone phosphate + NADPH + H(+). Its pathway is membrane lipid metabolism; glycerophospholipid metabolism. Functionally, catalyzes the reduction of the glycolytic intermediate dihydroxyacetone phosphate (DHAP) to sn-glycerol 3-phosphate (G3P), the key precursor for phospholipid synthesis. The polypeptide is Glycerol-3-phosphate dehydrogenase [NAD(P)+] (Nocardia farcinica (strain IFM 10152)).